We begin with the raw amino-acid sequence, 132 residues long: Acyl carrier protein 3, chloroplastic (132 aa).

A chloroplast-targeting transit peptide spans 1–49 (MASIAGSAVSFAKPVKAINTNSLSFSGARRGNAFLRLQPVPMRFAVCCS). In terms of domain architecture, Carrier spans 52–127 (QDTVEKVCEI…DAATLIDKLV (76 aa)). Position 87 is an O-(pantetheine 4'-phosphoryl)serine (S87).

It belongs to the acyl carrier protein (ACP) family. Post-translationally, 4'-phosphopantetheine is transferred from CoA to a specific serine of apo-ACP by acpS. This modification is essential for activity because fatty acids are bound in thioester linkage to the sulfhydryl of the prosthetic group.

The protein localises to the plastid. It localises to the chloroplast. Its pathway is lipid metabolism; fatty acid biosynthesis. Functionally, carrier of the growing fatty acid chain in fatty acid biosynthesis. The protein is Acyl carrier protein 3, chloroplastic (ACL1.3) of Hordeum vulgare (Barley).